Here is a 552-residue protein sequence, read N- to C-terminus: Carboxypeptidase Y homolog A (552 aa).

An N-terminal signal peptide occupies residues 1–18; the sequence is MRIATSTLLVGAASAAFA. A propeptide spanning residues 19 to 133 is cleaved from the precursor; that stretch reads PQDGTQRVLN…KLDNYNLRAR (115 aa). Cystine bridges form between Cys187–Cys427, Cys321–Cys335, Cys345–Cys368, Cys352–Cys361, and Cys390–Cys397. Asn218 carries N-linked (GlcNAc...) asparagine glycosylation. Ser274 is a catalytic residue. Asp466 is a catalytic residue. Asn516 is a glycosylation site (N-linked (GlcNAc...) asparagine). Residue His527 is part of the active site.

The protein belongs to the peptidase S10 family.

The protein localises to the vacuole. The catalysed reaction is Release of a C-terminal amino acid with broad specificity.. Its function is as follows. Vacuolar carboxypeptidase involved in degradation of small peptides. Digests preferentially peptides containing an aliphatic or hydrophobic residue in P1' position, as well as methionine, leucine or phenylalanine in P1 position of ester substrate. The chain is Carboxypeptidase Y homolog A (CPYA) from Pyricularia oryzae (strain 70-15 / ATCC MYA-4617 / FGSC 8958) (Rice blast fungus).